Reading from the N-terminus, the 501-residue chain is Cobyric acid synthase (501 aa).

The 192-residue stretch at 252–443 (DLDVAVIDLD…LHGIFDNPYW (192 aa)) folds into the GATase cobBQ-type domain. The active-site Nucleophile is Cys333. His435 is a catalytic residue.

This sequence belongs to the CobB/CobQ family. CobQ subfamily.

The protein operates within cofactor biosynthesis; adenosylcobalamin biosynthesis. In terms of biological role, catalyzes amidations at positions B, D, E, and G on adenosylcobyrinic A,C-diamide. NH(2) groups are provided by glutamine, and one molecule of ATP is hydrogenolyzed for each amidation. This Limosilactobacillus reuteri (strain DSM 20016) (Lactobacillus reuteri) protein is Cobyric acid synthase.